We begin with the raw amino-acid sequence, 103 residues long: Small ribosomal subunit protein uS10 (103 aa).

This sequence belongs to the universal ribosomal protein uS10 family. As to quaternary structure, part of the 30S ribosomal subunit.

Its function is as follows. Involved in the binding of tRNA to the ribosomes. The sequence is that of Small ribosomal subunit protein uS10 from Actinobacillus pleuropneumoniae serotype 5b (strain L20).